Consider the following 259-residue polypeptide: Type III pantothenate kinase (259 aa).

An ATP-binding site is contributed by 6 to 13; it reads DTGNTNTV. Residue 107–110 coordinates substrate; that stretch reads GPDR. Catalysis depends on aspartate 109, which acts as the Proton acceptor. Aspartate 129 contributes to the K(+) binding site. ATP is bound at residue threonine 132. Threonine 184 serves as a coordination point for substrate.

This sequence belongs to the type III pantothenate kinase family. Homodimer. NH4(+) serves as cofactor. The cofactor is K(+).

Its subcellular location is the cytoplasm. The catalysed reaction is (R)-pantothenate + ATP = (R)-4'-phosphopantothenate + ADP + H(+). It participates in cofactor biosynthesis; coenzyme A biosynthesis; CoA from (R)-pantothenate: step 1/5. Its function is as follows. Catalyzes the phosphorylation of pantothenate (Pan), the first step in CoA biosynthesis. The protein is Type III pantothenate kinase of Paracoccus denitrificans (strain Pd 1222).